We begin with the raw amino-acid sequence, 416 residues long: Peptide chain release factor subunit 1 (416 aa).

Belongs to the eukaryotic release factor 1 family. Heterodimer of two subunits, one of which binds GTP.

Its subcellular location is the cytoplasm. Its function is as follows. Directs the termination of nascent peptide synthesis (translation) in response to the termination codons UAA, UAG and UGA. The protein is Peptide chain release factor subunit 1 of Halorubrum lacusprofundi (strain ATCC 49239 / DSM 5036 / JCM 8891 / ACAM 34).